The sequence spans 94 residues: Putative regulatory protein Tmel_0100 (94 aa).

Belongs to the RemA family.

The protein is Putative regulatory protein Tmel_0100 of Thermosipho melanesiensis (strain DSM 12029 / CIP 104789 / BI429).